Consider the following 125-residue polypeptide: Small ribosomal subunit protein uS12m (125 aa).

2 disordered regions span residues 1–29 and 105–125; these read MPTK…QCPQ and LGIP…PKSK. The span at 10 to 23 shows a compositional bias: basic and acidic residues; it reads HGREEKQRTDRTRA.

The protein belongs to the universal ribosomal protein uS12 family.

The protein localises to the mitochondrion. Its function is as follows. Protein S12 is involved in the translation initiation step. The sequence is that of Small ribosomal subunit protein uS12m (RPS12) from Oryza sativa subsp. japonica (Rice).